The sequence spans 204 residues: Thiamine-phosphate synthase (204 aa).

4-amino-2-methyl-5-(diphosphooxymethyl)pyrimidine-binding positions include 28–32 (QLRIK) and asparagine 60. Positions 61 and 80 each coordinate Mg(2+). 4-amino-2-methyl-5-(diphosphooxymethyl)pyrimidine contacts are provided by serine 99 and lysine 128. 2-[(2R,5Z)-2-carboxy-4-methylthiazol-5(2H)-ylidene]ethyl phosphate is bound by residues glycine 157 and 177–178 (VT).

It belongs to the thiamine-phosphate synthase family. Requires Mg(2+) as cofactor.

The catalysed reaction is 2-[(2R,5Z)-2-carboxy-4-methylthiazol-5(2H)-ylidene]ethyl phosphate + 4-amino-2-methyl-5-(diphosphooxymethyl)pyrimidine + 2 H(+) = thiamine phosphate + CO2 + diphosphate. It catalyses the reaction 2-(2-carboxy-4-methylthiazol-5-yl)ethyl phosphate + 4-amino-2-methyl-5-(diphosphooxymethyl)pyrimidine + 2 H(+) = thiamine phosphate + CO2 + diphosphate. It carries out the reaction 4-methyl-5-(2-phosphooxyethyl)-thiazole + 4-amino-2-methyl-5-(diphosphooxymethyl)pyrimidine + H(+) = thiamine phosphate + diphosphate. The protein operates within cofactor biosynthesis; thiamine diphosphate biosynthesis; thiamine phosphate from 4-amino-2-methyl-5-diphosphomethylpyrimidine and 4-methyl-5-(2-phosphoethyl)-thiazole: step 1/1. Functionally, condenses 4-methyl-5-(beta-hydroxyethyl)thiazole monophosphate (THZ-P) and 2-methyl-4-amino-5-hydroxymethyl pyrimidine pyrophosphate (HMP-PP) to form thiamine monophosphate (TMP). In Rhizobium etli (strain ATCC 51251 / DSM 11541 / JCM 21823 / NBRC 15573 / CFN 42), this protein is Thiamine-phosphate synthase.